Reading from the N-terminus, the 142-residue chain is Transcriptional regulator MraZ (142 aa).

SpoVT-AbrB domains follow at residues 5 to 46 (THPV…DRSE) and 75 to 118 (AAAQ…DSEA).

This sequence belongs to the MraZ family. Forms oligomers.

The protein resides in the cytoplasm. It localises to the nucleoid. This is Transcriptional regulator MraZ from Tropheryma whipplei (strain TW08/27) (Whipple's bacillus).